Consider the following 92-residue polypeptide: Small ribosomal subunit protein uS17 (92 aa).

This sequence belongs to the universal ribosomal protein uS17 family. Part of the 30S ribosomal subunit.

In terms of biological role, one of the primary rRNA binding proteins, it binds specifically to the 5'-end of 16S ribosomal RNA. The polypeptide is Small ribosomal subunit protein uS17 (Bordetella petrii (strain ATCC BAA-461 / DSM 12804 / CCUG 43448)).